The chain runs to 383 residues: S-adenosylmethionine synthase (383 aa).

ATP is bound at residue His-15. Asp-17 contributes to the Mg(2+) binding site. Glu-43 is a K(+) binding site. L-methionine-binding residues include Glu-56 and Gln-99. A flexible loop region spans residues 99 to 109; that stretch reads QSPDINQGVDR. ATP contacts are provided by residues 164 to 166, 230 to 231, Asp-239, 245 to 246, Ala-262, and Lys-266; these read DAK, RF, and RK. Asp-239 contacts L-methionine. Lys-270 contributes to the L-methionine binding site.

It belongs to the AdoMet synthase family. As to quaternary structure, homotetramer; dimer of dimers. It depends on Mg(2+) as a cofactor. K(+) serves as cofactor.

The protein resides in the cytoplasm. It catalyses the reaction L-methionine + ATP + H2O = S-adenosyl-L-methionine + phosphate + diphosphate. It functions in the pathway amino-acid biosynthesis; S-adenosyl-L-methionine biosynthesis; S-adenosyl-L-methionine from L-methionine: step 1/1. In terms of biological role, catalyzes the formation of S-adenosylmethionine (AdoMet) from methionine and ATP. The overall synthetic reaction is composed of two sequential steps, AdoMet formation and the subsequent tripolyphosphate hydrolysis which occurs prior to release of AdoMet from the enzyme. The polypeptide is S-adenosylmethionine synthase (Actinobacillus pleuropneumoniae serotype 7 (strain AP76)).